A 422-amino-acid chain; its full sequence is Phagosome assembly factor 1 (422 aa).

This sequence belongs to the PHAF1 family. Interacts with BCAS3; the interaction is requrired for the association with the phagophore.

The protein resides in the cytoplasm. It is found in the preautophagosomal structure. Functionally, plays a regulatory role in autophagic activity. In complex with BCAS3, associates with the autophagosome formation site during both non-selective and selective autophagy. The chain is Phagosome assembly factor 1 from Mus musculus (Mouse).